Consider the following 366-residue polypeptide: Alanine racemase (366 aa).

Lys-40 functions as the Proton acceptor; specific for D-alanine in the catalytic mechanism. At Lys-40 the chain carries N6-(pyridoxal phosphate)lysine. Arg-136 contacts substrate. The Proton acceptor; specific for L-alanine role is filled by Tyr-263. Residue Met-310 coordinates substrate.

It belongs to the alanine racemase family. Pyridoxal 5'-phosphate is required as a cofactor.

The catalysed reaction is L-alanine = D-alanine. It participates in amino-acid biosynthesis; D-alanine biosynthesis; D-alanine from L-alanine: step 1/1. In terms of biological role, catalyzes the interconversion of L-alanine and D-alanine. May also act on other amino acids. The sequence is that of Alanine racemase (alr) from Streptococcus equi subsp. zooepidemicus (strain H70).